The following is a 208-amino-acid chain: Small ribosomal subunit protein uS4 (208 aa).

One can recognise an S4 RNA-binding domain in the interval 95–155 (TRLDALVLRA…AKSQTMVPFQ (61 aa)).

This sequence belongs to the universal ribosomal protein uS4 family. Part of the 30S ribosomal subunit. Contacts protein S5. The interaction surface between S4 and S5 is involved in control of translational fidelity.

One of the primary rRNA binding proteins, it binds directly to 16S rRNA where it nucleates assembly of the body of the 30S subunit. In terms of biological role, with S5 and S12 plays an important role in translational accuracy. This chain is Small ribosomal subunit protein uS4, found in Bifidobacterium adolescentis (strain ATCC 15703 / DSM 20083 / NCTC 11814 / E194a).